Reading from the N-terminus, the 421-residue chain is Aspartokinase (421 aa).

An ATP-binding site is contributed by 7–10; sequence KYGG. 25 to 30 serves as a coordination point for substrate; sequence RIVATK. Ser41 provides a ligand contact to ATP. Substrate is bound by residues 45–49, Glu74, 125–126, 151–154, and Ser154; these read DTTDE, LD, and RGGS. Residues 174–175, 180–185, and Lys210 each bind ATP; these read SD and YTADPR. 2 ACT domains span residues 267-343 and 349-421; these read VTVL…YDDQ and LVGA…GTGR. Substrate is bound by residues Asp274, 274–279, 292–294, Gln298, 360–361, 374–375, and 381–382; these read DKPGEA, NID, VT, NV, and SE.

Belongs to the aspartokinase family. In terms of assembly, tetramer consisting of 2 isoforms Alpha (catalytic and regulation) and of a homodimer of 2 isoforms Beta (regulation).

The catalysed reaction is L-aspartate + ATP = 4-phospho-L-aspartate + ADP. The protein operates within amino-acid biosynthesis; L-lysine biosynthesis via DAP pathway; (S)-tetrahydrodipicolinate from L-aspartate: step 1/4. It participates in amino-acid biosynthesis; L-methionine biosynthesis via de novo pathway; L-homoserine from L-aspartate: step 1/3. It functions in the pathway amino-acid biosynthesis; L-threonine biosynthesis; L-threonine from L-aspartate: step 1/5. Functionally, catalyzes the phosphorylation of the beta-carboxyl group of aspartic acid with ATP to yield 4-phospho-L-aspartate, which is involved in the branched biosynthetic pathway leading to the biosynthesis of amino acids lysine, threonine, isoleucine and methionine. The polypeptide is Aspartokinase (lysC) (Corynebacterium efficiens (strain DSM 44549 / YS-314 / AJ 12310 / JCM 11189 / NBRC 100395)).